The sequence spans 100 residues: Co-chaperonin GroES (100 aa).

This sequence belongs to the GroES chaperonin family. In terms of assembly, heptamer of 7 subunits arranged in a ring. Interacts with the chaperonin GroEL.

The protein resides in the cytoplasm. Its function is as follows. Together with the chaperonin GroEL, plays an essential role in assisting protein folding. The GroEL-GroES system forms a nano-cage that allows encapsulation of the non-native substrate proteins and provides a physical environment optimized to promote and accelerate protein folding. GroES binds to the apical surface of the GroEL ring, thereby capping the opening of the GroEL channel. This chain is Co-chaperonin GroES, found in Mycolicibacterium smegmatis (strain ATCC 700084 / mc(2)155) (Mycobacterium smegmatis).